We begin with the raw amino-acid sequence, 724 residues long: Putative mediator of RNA polymerase II transcription subunit 1 (724 aa).

3 disordered regions span residues 33-52 (SQQQ…VTSN), 147-167 (QQQQ…PLVE), and 486-524 (HRSS…NENG). Positions 140–200 (YLNQQKEQQQ…QEMTNELNNK (61 aa)) form a coiled coil. Composition is skewed to low complexity over residues 147 to 164 (QQQQ…QPQP) and 488 to 510 (SSQQ…QQQQ). Residues 511–524 (KKLNSVDESMNENG) show a composition bias toward polar residues.

This sequence belongs to the Mediator complex subunit 1 family. Component of the Mediator complex.

It is found in the nucleus. Its function is as follows. Component of the Mediator complex, a coactivator involved in the regulated transcription of nearly all RNA polymerase II-dependent genes. Mediator functions as a bridge to convey information from gene-specific regulatory proteins to the basal RNA polymerase II transcription machinery. Mediator is recruited to promoters by direct interactions with regulatory proteins and serves as a scaffold for the assembly of a functional preinitiation complex with RNA polymerase II and the general transcription factors. This chain is Putative mediator of RNA polymerase II transcription subunit 1 (med1), found in Dictyostelium discoideum (Social amoeba).